Here is a 248-residue protein sequence, read N- to C-terminus: 3-deoxy-manno-octulosonate cytidylyltransferase (248 aa).

This sequence belongs to the KdsB family.

The protein resides in the cytoplasm. The enzyme catalyses 3-deoxy-alpha-D-manno-oct-2-ulosonate + CTP = CMP-3-deoxy-beta-D-manno-octulosonate + diphosphate. It participates in nucleotide-sugar biosynthesis; CMP-3-deoxy-D-manno-octulosonate biosynthesis; CMP-3-deoxy-D-manno-octulosonate from 3-deoxy-D-manno-octulosonate and CTP: step 1/1. The protein operates within bacterial outer membrane biogenesis; lipopolysaccharide biosynthesis. Activates KDO (a required 8-carbon sugar) for incorporation into bacterial lipopolysaccharide in Gram-negative bacteria. This Salmonella enteritidis PT4 (strain P125109) protein is 3-deoxy-manno-octulosonate cytidylyltransferase.